The primary structure comprises 694 residues: Heat shock protein homolog SSE1 (694 aa).

A disordered region spans residues 671 to 694; it reads AQRSADSEAKKDATPEGDAQMDLD. The segment covering 675 to 684 has biased composition (basic and acidic residues); the sequence is ADSEAKKDAT.

This sequence belongs to the heat shock protein 70 family.

It localises to the cytoplasm. The sequence is that of Heat shock protein homolog SSE1 (SSE1) from Candida glabrata (strain ATCC 2001 / BCRC 20586 / JCM 3761 / NBRC 0622 / NRRL Y-65 / CBS 138) (Yeast).